The sequence spans 912 residues: Metabotropic glutamate receptor 4 (912 aa).

The signal sequence occupies residues 1–32; sequence MSGKGGWAWWWARLPLCLLLSLYAPWVPSSLG. At 33–587 the chain is on the extracellular side; the sequence is KPKGHPHMNS…IVKLEWDSPW (555 aa). Cys67 and Cys109 are oxidised to a cystine. The N-linked (GlcNAc...) asparagine glycan is linked to Asn98. L-glutamate is bound by residues Ser159, 180-182, and Tyr230; that span reads AST. 7 disulfides stabilise this stretch: Cys249–Cys538, Cys372–Cys388, Cys428–Cys435, Cys520–Cys539, Cys524–Cys542, Cys545–Cys557, and Cys560–Cys573. Asn301 carries N-linked (GlcNAc...) asparagine glycosylation. L-glutamate is bound at residue Asp312. Position 405 (Lys405) interacts with L-glutamate. N-linked (GlcNAc...) asparagine glycans are attached at residues Asn454 and Asn484. The N-linked (GlcNAc...) asparagine glycan is linked to Asn569. A helical membrane pass occupies residues 588–610; that stretch reads AVLPLFLAVVGIAATLFVVVTFV. Residues 611–624 lie on the Cytoplasmic side of the membrane; sequence RYNDTPIVKASGRE. Residues 625–645 form a helical membrane-spanning segment; it reads LSYVLLAGIFLCYATTFLMIA. Topologically, residues 646–656 are extracellular; sequence EPDLGTCSLRR. Residues 657–675 traverse the membrane as a helical segment; it reads IFLGLGMSISYAALLTKTN. Residues 676–699 lie on the Cytoplasmic side of the membrane; the sequence is RIYRIFEQGKRSVSAPRFISPASQ. A helical membrane pass occupies residues 700 to 720; the sequence is LAITFILISLQLLGICVWFVV. Topologically, residues 721–750 are extracellular; sequence DPSHSVVDFQDQRTLDPRFARGVLKCDISD. The chain crosses the membrane as a helical span at residues 751 to 772; sequence LSLICLLGYSMLLMVTCTVYAI. At 773–785 the chain is on the cytoplasmic side; that stretch reads KTRGVPETFNEAK. The chain crosses the membrane as a helical span at residues 786 to 808; sequence PIGFTMYTTCIVWLAFIPIFFGT. Residues 809–821 are Extracellular-facing; the sequence is SQSADKLYIQTTT. The chain crosses the membrane as a helical span at residues 822–847; it reads LTVSVSLSASVSLGMLYMPKVYIILF. Over 848-912 the chain is Cytoplasmic; the sequence is HPEQNVPKRK…TYVTYTNHAI (65 aa).

It belongs to the G-protein coupled receptor 3 family. Interacts with PICK1. In terms of tissue distribution, is widely distributed in the CNS. Predominant expression is seen in the granule cells of the cerebellum.

It is found in the cell membrane. Functionally, G-protein coupled receptor for glutamate. Ligand binding causes a conformation change that triggers signaling via guanine nucleotide-binding proteins (G proteins) and modulates the activity of down-stream effectors. Signaling inhibits adenylate cyclase activity. The chain is Metabotropic glutamate receptor 4 (Grm4) from Rattus norvegicus (Rat).